The chain runs to 549 residues: Cation/acetate symporter ActP (549 aa).

13 helical membrane-spanning segments follow: residues 33-53 (WQAI…TYWA), 77-97 (LAIA…ALVF), 103-123 (GLIY…LIAE), 148-168 (ILSA…QMVG), 183-203 (IAVV…GMLA), 206-226 (WVQI…AFMV), 262-282 (ISAL…PHIL), 303-323 (GFMG…IMLV), 355-375 (LFLG…VAGL), 404-424 (VSKI…VLFE), 428-448 (IAFM…PIIL), 464-484 (GGWL…TIWV), and 493-513 (IFPY…GIWL).

This sequence belongs to the sodium:solute symporter (SSF) (TC 2.A.21) family.

It is found in the cell inner membrane. Functionally, transports acetate. In Escherichia coli O1:K1 / APEC, this protein is Cation/acetate symporter ActP.